The following is a 498-amino-acid chain: Probable cytosol aminopeptidase (498 aa).

Residues Lys269 and Asp274 each contribute to the Mn(2+) site. The active site involves Lys281. Mn(2+) contacts are provided by Asp292, Asp351, and Glu353. The active site involves Arg355.

It belongs to the peptidase M17 family. The cofactor is Mn(2+).

The protein resides in the cytoplasm. The enzyme catalyses Release of an N-terminal amino acid, Xaa-|-Yaa-, in which Xaa is preferably Leu, but may be other amino acids including Pro although not Arg or Lys, and Yaa may be Pro. Amino acid amides and methyl esters are also readily hydrolyzed, but rates on arylamides are exceedingly low.. It catalyses the reaction Release of an N-terminal amino acid, preferentially leucine, but not glutamic or aspartic acids.. In terms of biological role, presumably involved in the processing and regular turnover of intracellular proteins. Catalyzes the removal of unsubstituted N-terminal amino acids from various peptides. The protein is Probable cytosol aminopeptidase of Glaesserella parasuis serovar 5 (strain SH0165) (Haemophilus parasuis).